We begin with the raw amino-acid sequence, 313 residues long: Aspartate carbamoyltransferase catalytic subunit (313 aa).

Carbamoyl phosphate contacts are provided by R66 and T67. K94 contributes to the L-aspartate binding site. The carbamoyl phosphate site is built by R116, H144, and Q147. The L-aspartate site is built by R177 and R231. Carbamoyl phosphate contacts are provided by G272 and P273.

The protein belongs to the aspartate/ornithine carbamoyltransferase superfamily. ATCase family. Heterododecamer (2C3:3R2) of six catalytic PyrB chains organized as two trimers (C3), and six regulatory PyrI chains organized as three dimers (R2).

The enzyme catalyses carbamoyl phosphate + L-aspartate = N-carbamoyl-L-aspartate + phosphate + H(+). Its pathway is pyrimidine metabolism; UMP biosynthesis via de novo pathway; (S)-dihydroorotate from bicarbonate: step 2/3. Functionally, catalyzes the condensation of carbamoyl phosphate and aspartate to form carbamoyl aspartate and inorganic phosphate, the committed step in the de novo pyrimidine nucleotide biosynthesis pathway. The protein is Aspartate carbamoyltransferase catalytic subunit of Pelagibacter ubique (strain HTCC1062).